A 612-amino-acid chain; its full sequence is Dihydroxy-acid dehydratase (612 aa).

A Mg(2+)-binding site is contributed by Asp-81. Cys-122 provides a ligand contact to [2Fe-2S] cluster. Asp-123 and Lys-124 together coordinate Mg(2+). At Lys-124 the chain carries N6-carboxylysine. Cys-195 contributes to the [2Fe-2S] cluster binding site. Glu-491 contributes to the Mg(2+) binding site. The active-site Proton acceptor is Ser-517.

This sequence belongs to the IlvD/Edd family. In terms of assembly, homodimer. It depends on [2Fe-2S] cluster as a cofactor. Mg(2+) is required as a cofactor.

It carries out the reaction (2R)-2,3-dihydroxy-3-methylbutanoate = 3-methyl-2-oxobutanoate + H2O. The enzyme catalyses (2R,3R)-2,3-dihydroxy-3-methylpentanoate = (S)-3-methyl-2-oxopentanoate + H2O. The protein operates within amino-acid biosynthesis; L-isoleucine biosynthesis; L-isoleucine from 2-oxobutanoate: step 3/4. It functions in the pathway amino-acid biosynthesis; L-valine biosynthesis; L-valine from pyruvate: step 3/4. Its function is as follows. Functions in the biosynthesis of branched-chain amino acids. Catalyzes the dehydration of (2R,3R)-2,3-dihydroxy-3-methylpentanoate (2,3-dihydroxy-3-methylvalerate) into 2-oxo-3-methylpentanoate (2-oxo-3-methylvalerate) and of (2R)-2,3-dihydroxy-3-methylbutanoate (2,3-dihydroxyisovalerate) into 2-oxo-3-methylbutanoate (2-oxoisovalerate), the penultimate precursor to L-isoleucine and L-valine, respectively. The polypeptide is Dihydroxy-acid dehydratase (Rhizobium leguminosarum bv. trifolii (strain WSM2304)).